The sequence spans 293 residues: Oxidoreductase clz16 (293 aa).

Belongs to the asaB hydroxylase/desaturase family.

Its pathway is secondary metabolite biosynthesis. Its function is as follows. Oxidoreductase; part of the gene cluster that mediates the biosynthesis of squalestatin S1 (SQS1, also known as zaragozic acid A), a heavily oxidized fungal polyketide that offers potent cholesterol lowering activity by targeting squalene synthase (SS). SQS1 is composed of a 2,8-dioxobicyclic[3.2.1]octane-3,4,5-tricarboxyclic acid core that is connected to two lipophilic polyketide arms. These initial steps feature the priming of an unusual benzoic acid starter unit onto the highly reducing polyketide synthase clz14, followed by oxaloacetate extension and product release to generate a tricarboxylic acid containing product. The phenylalanine ammonia lyase (PAL) clz10 and the acyl-CoA ligase clz12 are involved in transforming phenylalanine into benzoyl-CoA. The citrate synthase-like protein clz17 is involved in connecting the C-alpha-carbons of the hexaketide chain and oxaloacetate to afford the tricarboxylic acid unit. The potential hydrolytic enzymes, clz11 and clz13, are in close proximity to pks2 and may participate in product release. On the other side, the tetraketide arm is synthesized by a the squalestatin tetraketide synthase clz2 and enzymatically esterified to the core in the last biosynthetic step, by the acetyltransferase clz6. The biosynthesis of the tetraketide must involve 3 rounds of chain extension. After the first and second rounds methyl-transfer occurs, and in all rounds of extension the ketoreductase and dehydratase are active. The enoyl reductase and C-MeT of clz2 are not active in the final round of extension. The acetyltransferase clz6 appears to have a broad substrate selectivity for its acyl CoA substrate, allowing the in vitro synthesis of novel squalestatins. The biosynthesis of SQS1 requires several oxidative steps likely performed by oxidoreductases clz3, clz15 and clz16. Finally, in support of the identification of the cluster as being responsible for SQS1 production, the cluster contains a gene encoding a putative squalene synthase (SS) clz20, suggesting a likely mechanism for self-resistance. The sequence is that of Oxidoreductase clz16 from Cochliobolus lunatus (Filamentous fungus).